Here is a 440-residue protein sequence, read N- to C-terminus: Xylose isomerase (440 aa).

Active-site residues include His100 and Asp103. Mg(2+) contacts are provided by Glu231, Glu267, His270, Asp295, Asp306, Asp308, and Asp338.

The protein belongs to the xylose isomerase family. As to quaternary structure, homotetramer. Mg(2+) serves as cofactor.

The protein localises to the cytoplasm. The catalysed reaction is alpha-D-xylose = alpha-D-xylulofuranose. In Burkholderia orbicola (strain MC0-3), this protein is Xylose isomerase.